A 354-amino-acid chain; its full sequence is UPF0421 protein BH2644 (354 aa).

Helical transmembrane passes span Ala-22–Ile-42, Leu-60–Phe-80, Thr-107–Ala-127, and Val-133–Pro-153.

This sequence belongs to the UPF0421 family.

The protein localises to the cell membrane. The polypeptide is UPF0421 protein BH2644 (Halalkalibacterium halodurans (strain ATCC BAA-125 / DSM 18197 / FERM 7344 / JCM 9153 / C-125) (Bacillus halodurans)).